The following is a 275-amino-acid chain: Polyamine aminopropyltransferase (275 aa).

Residues 2–235 enclose the PABS domain; the sequence is ELWFTEKQTK…GLWTFTIGSK (234 aa). Gln-31 serves as a coordination point for S-methyl-5'-thioadenosine. 2 residues coordinate spermidine: His-62 and Asp-86. S-methyl-5'-thioadenosine contacts are provided by residues Glu-106 and 137–138; that span reads DG. Asp-155 functions as the Proton acceptor in the catalytic mechanism. Spermidine is bound at residue 155-158; that stretch reads DSTE. Pro-162 contributes to the S-methyl-5'-thioadenosine binding site.

It belongs to the spermidine/spermine synthase family. In terms of assembly, homodimer or homotetramer.

The protein resides in the cytoplasm. It catalyses the reaction S-adenosyl 3-(methylsulfanyl)propylamine + putrescine = S-methyl-5'-thioadenosine + spermidine + H(+). The protein operates within amine and polyamine biosynthesis; spermidine biosynthesis; spermidine from putrescine: step 1/1. Its function is as follows. Catalyzes the irreversible transfer of a propylamine group from the amino donor S-adenosylmethioninamine (decarboxy-AdoMet) to putrescine (1,4-diaminobutane) to yield spermidine. The sequence is that of Polyamine aminopropyltransferase from Bacillus cereus (strain ATCC 10987 / NRS 248).